A 540-amino-acid chain; its full sequence is Glucose-6-phosphate isomerase (540 aa).

E350 serves as the catalytic Proton donor. Residues H381 and K503 contribute to the active site.

This sequence belongs to the GPI family.

It localises to the cytoplasm. It catalyses the reaction alpha-D-glucose 6-phosphate = beta-D-fructose 6-phosphate. It participates in carbohydrate biosynthesis; gluconeogenesis. Its pathway is carbohydrate degradation; glycolysis; D-glyceraldehyde 3-phosphate and glycerone phosphate from D-glucose: step 2/4. Functionally, catalyzes the reversible isomerization of glucose-6-phosphate to fructose-6-phosphate. This chain is Glucose-6-phosphate isomerase, found in Burkholderia lata (strain ATCC 17760 / DSM 23089 / LMG 22485 / NCIMB 9086 / R18194 / 383).